The sequence spans 231 residues: ATP phosphoribosyltransferase (231 aa).

It belongs to the ATP phosphoribosyltransferase family. Short subfamily. In terms of assembly, heteromultimer composed of HisG and HisZ subunits.

It is found in the cytoplasm. It catalyses the reaction 1-(5-phospho-beta-D-ribosyl)-ATP + diphosphate = 5-phospho-alpha-D-ribose 1-diphosphate + ATP. It functions in the pathway amino-acid biosynthesis; L-histidine biosynthesis; L-histidine from 5-phospho-alpha-D-ribose 1-diphosphate: step 1/9. Catalyzes the condensation of ATP and 5-phosphoribose 1-diphosphate to form N'-(5'-phosphoribosyl)-ATP (PR-ATP). Has a crucial role in the pathway because the rate of histidine biosynthesis seems to be controlled primarily by regulation of HisG enzymatic activity. The sequence is that of ATP phosphoribosyltransferase (hisG) from Rhizobium etli (strain CIAT 652).